The sequence spans 539 residues: CTP synthase (539 aa).

The interval methionine 1–leucine 269 is amidoligase domain. Serine 15 provides a ligand contact to CTP. UTP is bound at residue serine 15. Serine 16–isoleucine 21 serves as a coordination point for ATP. L-glutamine is bound at residue tyrosine 56. Aspartate 73 lines the ATP pocket. Aspartate 73 and glutamate 143 together coordinate Mg(2+). Residues aspartate 150 to glutamate 152, lysine 190 to glutamine 195, and lysine 226 each bind CTP. UTP-binding positions include lysine 190–glutamine 195 and lysine 226. Positions asparagine 295–glycine 537 constitute a Glutamine amidotransferase type-1 domain. Glycine 357 is an L-glutamine binding site. Cysteine 384 acts as the Nucleophile; for glutamine hydrolysis in catalysis. L-glutamine-binding positions include leucine 385 to glutamine 388, glutamate 408, and arginine 465. Active-site residues include histidine 510 and glutamate 512.

The protein belongs to the CTP synthase family. As to quaternary structure, homotetramer.

It carries out the reaction UTP + L-glutamine + ATP + H2O = CTP + L-glutamate + ADP + phosphate + 2 H(+). The catalysed reaction is L-glutamine + H2O = L-glutamate + NH4(+). The enzyme catalyses UTP + NH4(+) + ATP = CTP + ADP + phosphate + 2 H(+). It participates in pyrimidine metabolism; CTP biosynthesis via de novo pathway; CTP from UDP: step 2/2. With respect to regulation, allosterically activated by GTP, when glutamine is the substrate; GTP has no effect on the reaction when ammonia is the substrate. The allosteric effector GTP functions by stabilizing the protein conformation that binds the tetrahedral intermediate(s) formed during glutamine hydrolysis. Inhibited by the product CTP, via allosteric rather than competitive inhibition. Catalyzes the ATP-dependent amination of UTP to CTP with either L-glutamine or ammonia as the source of nitrogen. Regulates intracellular CTP levels through interactions with the four ribonucleotide triphosphates. The polypeptide is CTP synthase (Cytophaga hutchinsonii (strain ATCC 33406 / DSM 1761 / CIP 103989 / NBRC 15051 / NCIMB 9469 / D465)).